The sequence spans 444 residues: Homogentisate 1,2-dioxygenase (444 aa).

The active-site Proton acceptor is histidine 298. 2 residues coordinate Fe cation: histidine 341 and glutamate 347. Tyrosine 356 and histidine 377 together coordinate homogentisate. A Fe cation-binding site is contributed by histidine 377.

This sequence belongs to the homogentisate dioxygenase family. Hexamer; dimer of trimers. The cofactor is Fe cation.

It catalyses the reaction homogentisate + O2 = 4-maleylacetoacetate + H(+). It participates in amino-acid degradation; L-phenylalanine degradation; acetoacetate and fumarate from L-phenylalanine: step 4/6. Functionally, involved in the catabolism of homogentisate (2,5-dihydroxyphenylacetate or 2,5-OH-PhAc), a central intermediate in the degradation of phenylalanine and tyrosine. Catalyzes the oxidative ring cleavage of the aromatic ring of homogentisate to yield maleylacetoacetate. The protein is Homogentisate 1,2-dioxygenase of Burkholderia ambifaria (strain MC40-6).